The primary structure comprises 341 residues: Cell wall mannoprotein PIR1 (341 aa).

Residues 1-18 (MQYKKSLVASALVATSLA) form the signal peptide. Positions 19–63 (AYAPKDPWSTLTPSATYKGGITDYSSTFGIAVEPIATTASSKAKR) are excised as a propeptide. 8 PIR1/2/3 repeats span residues 64–82 (AAAI…TKTT), 83–101 (AAAV…TKTK), 102–125 (AAAV…AKTT), 126–144 (AAAV…TKTK), 145–163 (AAAV…TKTT), 164–182 (AAAV…TKTT), 183–201 (AAAV…TNTT), and 202–220 (VAPV…TLTS).

This sequence belongs to the PIR protein family. In terms of processing, covalently linked to beta-1,3-glucan of the inner cell wall layer via an alkali-sensitive ester linkage between the gamma-carboxyl group of glutamic acids, arising from specific glutamines within the PIR1/2/3 repeats, and hydroxyl groups of glucoses of beta-1,3-glucan chains. Post-translationally, O-glycosylated. Extensively O-mannosylated.

Its subcellular location is the secreted. The protein resides in the cell wall. Component of the outer cell wall layer. Required for stability of the cell wall and for optimal growth. Required for resistance against several antifungal and cell wall-perturbing agents and for tolerance to heat shock. This Saccharomyces cerevisiae (strain ATCC 204508 / S288c) (Baker's yeast) protein is Cell wall mannoprotein PIR1 (PIR1).